A 116-amino-acid chain; its full sequence is Appetite-regulating hormone (116 aa).

The N-terminal stretch at 1-23 (MPAPRTICSLLLLSMLWMDLAMA) is a signal peptide. Residue S26 is the site of O-decanoyl serine; alternate attachment. Residue S26 is the site of O-hexanoyl serine; alternate attachment. Residue S26 is the site of O-octanoyl serine; alternate attachment. The disordered stretch occupies residues 29–67 (SPEHQKLQRKEPKKPSGRLKPRALEGQFDPDVGSQEEGA). A compositionally biased stretch (basic and acidic residues) spans 31-42 (EHQKLQRKEPKK). The propeptide at 51-74 (ALEGQFDPDVGSQEEGAEDELEIR) is removed in mature form. L97 bears the Leucine amide mark. Residues 98–116 (GKFLQDILWEEAEETLADE) constitute a propeptide, removed in mature form.

The protein belongs to the motilin family. In terms of processing, O-octanoylated by GOAT/MBOAT4. O-octanoylation is essential for ghrelin activity. Amidation of Leu-97 is essential for obestatin activity.

Its subcellular location is the secreted. Ghrelin is the ligand for growth hormone secretagogue receptor type 1 (GHSR). Induces the release of growth hormone from the pituitary. Has an appetite-stimulating effect, induces adiposity and stimulates gastric acid secretion. Involved in growth regulation. Its function is as follows. Obestatin may be the ligand for GPR39. May have an appetite-reducing effect resulting in decreased food intake. May reduce gastric emptying activity and jejunal motility. The chain is Appetite-regulating hormone (GHRL) from Capra hircus (Goat).